The primary structure comprises 200 residues: ATP-dependent Clp protease proteolytic subunit (200 aa).

The active-site Nucleophile is Ser98. The active site involves His123.

The protein belongs to the peptidase S14 family. Fourteen ClpP subunits assemble into 2 heptameric rings which stack back to back to give a disk-like structure with a central cavity, resembling the structure of eukaryotic proteasomes.

It localises to the cytoplasm. It catalyses the reaction Hydrolysis of proteins to small peptides in the presence of ATP and magnesium. alpha-casein is the usual test substrate. In the absence of ATP, only oligopeptides shorter than five residues are hydrolyzed (such as succinyl-Leu-Tyr-|-NHMec, and Leu-Tyr-Leu-|-Tyr-Trp, in which cleavage of the -Tyr-|-Leu- and -Tyr-|-Trp bonds also occurs).. Functionally, cleaves peptides in various proteins in a process that requires ATP hydrolysis. Has a chymotrypsin-like activity. Plays a major role in the degradation of misfolded proteins. The sequence is that of ATP-dependent Clp protease proteolytic subunit from Ehrlichia canis (strain Jake).